The primary structure comprises 346 residues: UDP-3-O-acylglucosamine N-acyltransferase (346 aa).

The Proton acceptor role is filled by His-240.

The protein belongs to the transferase hexapeptide repeat family. LpxD subfamily. Homotrimer.

It catalyses the reaction a UDP-3-O-[(3R)-3-hydroxyacyl]-alpha-D-glucosamine + a (3R)-hydroxyacyl-[ACP] = a UDP-2-N,3-O-bis[(3R)-3-hydroxyacyl]-alpha-D-glucosamine + holo-[ACP] + H(+). The protein operates within bacterial outer membrane biogenesis; LPS lipid A biosynthesis. Functionally, catalyzes the N-acylation of UDP-3-O-acylglucosamine using 3-hydroxyacyl-ACP as the acyl donor. Is involved in the biosynthesis of lipid A, a phosphorylated glycolipid that anchors the lipopolysaccharide to the outer membrane of the cell. The chain is UDP-3-O-acylglucosamine N-acyltransferase from Phocaeicola vulgatus (strain ATCC 8482 / DSM 1447 / JCM 5826 / CCUG 4940 / NBRC 14291 / NCTC 11154) (Bacteroides vulgatus).